The sequence spans 1758 residues: RanBP2-like and GRIP domain-containing protein 4 (1758 aa).

Residue serine 21 is modified to Phosphoserine. TPR repeat units lie at residues 60–93 and 584–617; these read PRAH…NPTQ and QKMG…LKII. Residues 761 to 805 are disordered; sequence DPLYKNGSLRNADSEIKHSTPSPTKYSLSPSKSYKYSPKTPPRWA. Residues 779-798 are compositionally biased toward low complexity; the sequence is STPSPTKYSLSPSKSYKYSP. The RanBD1 1 domain maps to 1037–1173; sequence HFEPVVQMPE…FEECQQLLLD (137 aa). Disordered stretches follow at residues 1213–1249 and 1295–1332; these read QTKV…TLEW and SFKS…ERDG. Residues 1236-1245 show a composition bias toward polar residues; the sequence is IKPNPENTGP. Residues 1295–1309 show a composition bias toward low complexity; the sequence is SFKSALSPSKSPAKL. The span at 1318-1330 shows a compositional bias: acidic residues; that stretch reads TDEESDVTQEEER. Residues 1334-1470 enclose the RanBD1 2 domain; that stretch reads YFEPVVPLPD…FDEAKTAQEK (137 aa). The segment covering 1583–1594 has biased composition (polar residues); the sequence is SETSSVAQSGSE. The tract at residues 1583–1621 is disordered; sequence SETSSVAQSGSESKVEPKKCELSKNSDIEQSSDSKVKNL. Over residues 1595–1618 the composition is skewed to basic and acidic residues; sequence SKVEPKKCELSKNSDIEQSSDSKV. Residues 1703-1753 enclose the GRIP domain; the sequence is QEESAANVEHLKNVLLQFIFLKPGSERERLLPVINTMLQLSPEEKGKLAAV.

The polypeptide is RanBP2-like and GRIP domain-containing protein 4 (RGPD4) (Homo sapiens (Human)).